Consider the following 86-residue polypeptide: Small ribosomal subunit protein bS20 (86 aa).

The disordered stretch occupies residues 1-27; it reads MANSKQAKKRAGQSEKRRQHNASRRSM.

It belongs to the bacterial ribosomal protein bS20 family.

Functionally, binds directly to 16S ribosomal RNA. The polypeptide is Small ribosomal subunit protein bS20 (Colwellia psychrerythraea (strain 34H / ATCC BAA-681) (Vibrio psychroerythus)).